A 394-amino-acid polypeptide reads, in one-letter code: MLTQEHINIIKSTIPLLESAGPALTQHFYQRMFSHNPELKHIFNMTHQKTGRQSVALFEAIAAYAKHIDNLAALTSAVERIAHKHTSFNIQPEHYQIVGHHLLETLRELAPDAFTQPVEEAWTAAYFFLAQVFIDREGALYLERKQALGGWRDGRTFVVREKQVESAYVTSFVLVPADGGAVLDYQPGQYIGIEVTPEGSDYREIRQYSLSHASNGREYRISVKREGVGSDNPGLVSHYLHNNVKVGDSVKLYAPAGDFFYVERERPVVLISAGVGATPMQAILHTLAKQNKSGVTYLYACNSAKEHTFAQETAQLIAQQGWMQQVWYRDESADDVLQGEMQLAELILPIEDGDFYLCGPIGFMQYVVKQLLALGVDKARIHYEVFGPHAQLAA.

A Globin domain is found at 1–138; the sequence is MLTQEHINII…LAQVFIDREG (138 aa). Residue histidine 85 coordinates heme b. Catalysis depends on charge relay system residues tyrosine 95 and glutamate 137. The tract at residues 149–394 is reductase; it reads GGWRDGRTFV…VFGPHAQLAA (246 aa). Positions 152-262 constitute an FAD-binding FR-type domain; the sequence is RDGRTFVVRE…YAPAGDFFYV (111 aa). Residues tyrosine 190 and 206-209 each bind FAD; that span reads RQYS. An NADP(+)-binding site is contributed by 274–279; the sequence is GVGATP. Position 385 to 388 (385 to 388) interacts with FAD; that stretch reads VFGP.

The protein belongs to the globin family. Two-domain flavohemoproteins subfamily. In the C-terminal section; belongs to the flavoprotein pyridine nucleotide cytochrome reductase family. It depends on heme b as a cofactor. FAD is required as a cofactor.

The enzyme catalyses 2 nitric oxide + NADPH + 2 O2 = 2 nitrate + NADP(+) + H(+). It carries out the reaction 2 nitric oxide + NADH + 2 O2 = 2 nitrate + NAD(+) + H(+). Is involved in NO detoxification in an aerobic process, termed nitric oxide dioxygenase (NOD) reaction that utilizes O(2) and NAD(P)H to convert NO to nitrate, which protects the bacterium from various noxious nitrogen compounds. Therefore, plays a central role in the inducible response to nitrosative stress. The sequence is that of Flavohemoprotein (hmp) from Vibrio cholerae serotype O1 (strain ATCC 39315 / El Tor Inaba N16961).